A 471-amino-acid chain; its full sequence is BPI fold-containing family B member 1 (471 aa).

The N-terminal stretch at 1-18 is a signal peptide; that stretch reads MTNPWIVSLLLGATLVQA. 4 N-linked (GlcNAc...) asparagine glycosylation sites follow: N150, N157, N260, and N397. Residues C154 and C197 are joined by a disulfide bond.

This sequence belongs to the BPI/LBP/Plunc superfamily. Plunc family.

It is found in the secreted. Its function is as follows. May play a role in innate immunity in mouth, nose and lungs. Binds bacterial lipopolysaccharide (LPS) and modulates the cellular responses to LPS. The sequence is that of BPI fold-containing family B member 1 (Bpifb1) from Rattus norvegicus (Rat).